Reading from the N-terminus, the 647-residue chain is Nucleoside triphosphatase I (647 aa).

The Helicase ATP-binding domain maps to 48–213; sequence FIGLSELNSL…KYLINLLRPK (166 aa). 61–68 lines the ATP pocket; sequence WDTGYGKT. The DEXH box motif lies at 150 to 153; sequence DEVH. The Helicase C-terminal domain maps to 377 to 540; the sequence is YIEACKIILN…KINVLNSFMK (164 aa). The interval 466 to 532 is binding to the cap-specific mRNA (nucleoside-2'-O-)-methyltransferase; that stretch reads DIIILDLPWK…DLIKSKQDKI (67 aa).

The protein belongs to the helicase family. NPH I subfamily. Monomer. Interacts (via C-terminus) with RAP94 (via N-terminus). Interacts with the cap-specific mRNA (nucleoside-2'-O-)-methyltransferase.

Its subcellular location is the virion. It carries out the reaction a ribonucleoside 5'-triphosphate + H2O = a ribonucleoside 5'-diphosphate + phosphate + H(+). In terms of biological role, DNA-dependent ATPase required for providing the needed energy to achieve the termination of early transcripts. Acts in concert with the RAP94 subunit of the virion RNA polymerase and the capping enzyme/VTF to catalyze release of UUUUUNU-containing nascent RNA from the elongation complex. NPH-I must bind ssDNA in order to exhibit ATPase activity. This is Nucleoside triphosphatase I (NPH1) from Melanoplus sanguinipes entomopoxvirus (MsEPV).